The following is a 425-amino-acid chain: cAMP/cGMP-dependent 3',5'-cAMP/cGMP phosphodiesterase 7 (425 aa).

The first 17 residues, 1-17 (MKYLILILIFFIEINNG), serve as a signal peptide directing secretion.

It belongs to the cyclic nucleotide phosphodiesterase class-II family.

Its subcellular location is the secreted. The protein resides in the extracellular space. It is found in the cell surface. The enzyme catalyses 3',5'-cyclic AMP + H2O = AMP + H(+). The catalysed reaction is 3',5'-cyclic GMP + H2O = GMP + H(+). With respect to regulation, inhibited by dithiotreitol (DTT). Functionally, phosphodiesterase with dual cAMP/cGMP specificity. However, displays a preference for cAMP over cGMP. Seems to regulate cAMP/cGMP concentration especially during cell aggregation. The polypeptide is cAMP/cGMP-dependent 3',5'-cAMP/cGMP phosphodiesterase 7 (pde7) (Dictyostelium discoideum (Social amoeba)).